The sequence spans 340 residues: NADH-quinone oxidoreductase subunit H 2 (340 aa).

8 helical membrane-spanning segments follow: residues 10–30 (LIVAFGLIVFKVALLIAILLL), 84–104 (FLFKLAPILALAPPFVVFVAI), 126–146 (VALLFVFAVIGIEVFGVIFGG), 172–192 (MGFAVIGVVMLAQSMSLLDIV), 198–218 (VWNIVYQPVGFFVFFVAGLAE), 255–275 (VIVLLVSVLLVILFFGGWNGI), 279–299 (MPPLLWFLLKVAFFVYLFIWF), and 318–338 (VLLPLSMANIIITGVLLGAAA).

Belongs to the complex I subunit 1 family. As to quaternary structure, NDH-1 is composed of 14 different subunits. Subunits NuoA, H, J, K, L, M, N constitute the membrane sector of the complex.

The protein localises to the cell inner membrane. It catalyses the reaction a quinone + NADH + 5 H(+)(in) = a quinol + NAD(+) + 4 H(+)(out). In terms of biological role, NDH-1 shuttles electrons from NADH, via FMN and iron-sulfur (Fe-S) centers, to quinones in the respiratory chain. The immediate electron acceptor for the enzyme in this species is believed to be ubiquinone. Couples the redox reaction to proton translocation (for every two electrons transferred, four hydrogen ions are translocated across the cytoplasmic membrane), and thus conserves the redox energy in a proton gradient. This subunit may bind ubiquinone. The polypeptide is NADH-quinone oxidoreductase subunit H 2 (Rhizobium etli (strain ATCC 51251 / DSM 11541 / JCM 21823 / NBRC 15573 / CFN 42)).